Consider the following 322-residue polypeptide: Probable ethanolamine-phosphate cytidylyltransferase (322 aa).

Belongs to the cytidylyltransferase family.

The catalysed reaction is phosphoethanolamine + CTP + H(+) = CDP-ethanolamine + diphosphate. It participates in phospholipid metabolism; phosphatidylethanolamine biosynthesis; phosphatidylethanolamine from ethanolamine: step 2/3. The protein is Probable ethanolamine-phosphate cytidylyltransferase (MUQ1) of Encephalitozoon cuniculi (strain GB-M1) (Microsporidian parasite).